Here is a 555-residue protein sequence, read N- to C-terminus: Capsid vertex component 2 (555 aa).

The segment at 1–47 is interaction with major capsid protein/MCP; the sequence is MAQCNLFYQYPITPILEGHVRNILICTEEDIRRLQSQSSLRLREKID.

This sequence belongs to the herpesviridae CVC2 protein family. In terms of assembly, heterodimerizes with CVC1. Interacts with major capsid protein/MCP and triplex capsid protein 1/TRX1 at the pentamer vertices. Interacts with the large tegument protein/LTP.

The protein resides in the virion. It localises to the host nucleus. Capsid vertex-specific component that plays a role during viral DNA encapsidation, assuring correct genome cleavage and presumably stabilizing capsids that contain full-length viral genomes. Participates in the interaction between the capsid and the tegument through interaction with the large tegument protein/LTP. The chain is Capsid vertex component 2 from Homo sapiens (Human).